A 207-amino-acid chain; its full sequence is Large ribosomal subunit protein uL4 (207 aa).

The tract at residues 50 to 75 (KTKTVSEVSGTTKKPFKQKGTGNARQ) is disordered.

This sequence belongs to the universal ribosomal protein uL4 family. Part of the 50S ribosomal subunit.

One of the primary rRNA binding proteins, this protein initially binds near the 5'-end of the 23S rRNA. It is important during the early stages of 50S assembly. It makes multiple contacts with different domains of the 23S rRNA in the assembled 50S subunit and ribosome. Its function is as follows. Forms part of the polypeptide exit tunnel. This Rickettsia felis (strain ATCC VR-1525 / URRWXCal2) (Rickettsia azadi) protein is Large ribosomal subunit protein uL4.